A 139-amino-acid polypeptide reads, in one-letter code: ATP synthase epsilon chain (139 aa).

This sequence belongs to the ATPase epsilon chain family. As to quaternary structure, F-type ATPases have 2 components, CF(1) - the catalytic core - and CF(0) - the membrane proton channel. CF(1) has five subunits: alpha(3), beta(3), gamma(1), delta(1), epsilon(1). CF(0) has three main subunits: a, b and c.

Its subcellular location is the cell inner membrane. Produces ATP from ADP in the presence of a proton gradient across the membrane. This is ATP synthase epsilon chain from Pseudomonas syringae pv. tomato (strain ATCC BAA-871 / DC3000).